Consider the following 770-residue polypeptide: MLPSLALLLLTTWTARALEVPTDGNAGLLAEPQIAMFCGKLNMHMNVQNGKWEPDPSGTKTCIGSKEGILQYCQEVYPELQITNVVEANQPVTIQNWCKRSRKQCKTHPHFVIPYRCLVGEFVSDALLVPDKCKFLHQERMDVCETHLHWHTVAKETCSEKSTNLHDYGMLLPCGIDKFRGVEFVCCPLAEESDNIDSADAEEDDSDVWWGGADTDYADGSEDKVVEVAEEEEVADVEEEEADDDEDVEDGDEVEEEAEEPYEEATEKTTSIATTTTTTTESVEEVVREVCSEQAETGPCRSMISRWYFDVTEGKCAPFFYGGCGGNRNNFDTEEYCMAVCGSVMSQNLLKTSGEPVSQGPVKLPTTAASTPDAVDKYLETPGDENEHAHFQKAKERLEAKHRERMSQVMREWEEAERQAKNLPKADKKAVIQHFQEKVESLEQEAANERQQLVETHMARVEAMLNDRRRLALENYITALQAVPPRPRHVFNMLKKYVRAEQKDRQHTLKHFEHVRMVDPKKAAQIRSQVMTHLRVIYERMNQSLSLLYNVPAVAEEIQDEVDELLQKEQNYSDDVLANMISEPRISYGNDALMPSLTETKTTVELLPVNGEFSLDDLQPWHPFGVDSVPANTENEVEPVDARPAADRGLTTRPGSGLTNIKTEEISEVKMDAEFRHDSGYEVHHQKLVFFAEDVGSNKGAIIGLMVGGVVIATVIVITLVMLKKKQYTSIHHGVVEVDAAVTPEERHLSKMQQNGYENPTYKFFEQMQN.

An N-terminal signal peptide occupies residues 1 to 17 (MLPSLALLLLTTWTARA). Over 18–701 (LEVPTDGNAG…AEDVGSNKGA (684 aa)) the chain is Extracellular. A GFLD subdomain region spans residues 28-123 (LLAEPQIAMF…PYRCLVGEFV (96 aa)). The region spanning 28 to 189 (LLAEPQIAMF…RGVEFVCCPL (162 aa)) is the E1 domain. Disulfide bonds link cysteine 38-cysteine 62, cysteine 73-cysteine 117, cysteine 98-cysteine 105, cysteine 133-cysteine 187, cysteine 144-cysteine 174, and cysteine 158-cysteine 186. 96–110 (NWCKRSRKQCKTHPH) contacts heparin. The segment at 131–189 (DKCKFLHQERMDVCETHLHWHTVAKETCSEKSTNLHDYGMLLPCGIDKFRGVEFVCCPL) is cuBD subdomain. Residues 135-155 (FLHQERMDVCETHLHWHTVAK) form a copper-binding region. Cu(2+)-binding residues include histidine 147, histidine 151, and tyrosine 168. Residues 181-188 (GVEFVCCP) form a zinc-binding region. Residues glutamate 183, cysteine 186, and cysteine 187 each contribute to the Zn(2+) site. A compositionally biased stretch (acidic residues) spans 196–207 (IDSADAEEDDSD). Residues 196-281 (IDSADAEEDD…IATTTTTTTE (86 aa)) form a disordered region. Serine 198 bears the Phosphoserine; by CK2 mark. The residue at position 206 (serine 206) is a Phosphoserine; by CK1. Position 217 is a sulfotyrosine (tyrosine 217). Acidic residues predominate over residues 228-264 (VAEEEEVADVEEEEADDDEDVEDGDEVEEEAEEPYEE). Low complexity predominate over residues 268–281 (KTTSIATTTTTTTE). Cystine bridges form between cysteine 291–cysteine 341, cysteine 300–cysteine 324, and cysteine 316–cysteine 337. Positions 291-341 (CSEQAETGPCRSMISRWYFDVTEGKCAPFFYGGCGGNRNNFDTEEYCMAVC) constitute a BPTI/Kunitz inhibitor domain. Position 336 is a sulfotyrosine (tyrosine 336). The OX-2 motif lies at 344–365 (VMSQNLLKTSGEPVSQGPVKLP). One can recognise an E2 domain in the interval 374–565 (AVDKYLETPG…EEIQDEVDEL (192 aa)). The interval 391–423 (FQKAKERLEAKHRERMSQVMREWEEAERQAKNL) is heparin-binding. Serine 441 is modified (phosphoserine). The tract at residues 491–522 (FNMLKKYVRAEQKDRQHTLKHFEHVRMVDPKK) is heparin-binding. Tyrosine 497 carries the phosphotyrosine modification. A collagen-binding region spans residues 523 to 540 (AAQIRSQVMTHLRVIYER). Residues asparagine 542 and asparagine 571 are each glycosylated (N-linked (GlcNAc...) asparagine). O-linked (Xyl...) (chondroitin sulfate) serine glycosylation is present at serine 656. The Cu(2+) site is built by histidine 677, tyrosine 681, histidine 684, and histidine 685. Zn(2+) is bound by residues histidine 677, tyrosine 681, histidine 684, and histidine 685. The interaction with PSEN1 stretch occupies residues 695–722 (VGSNKGAIIGLMVGGVVIATVIVITLVM). Residues 702–722 (IIGLMVGGVVIATVIVITLVM) form a helical membrane-spanning segment. The Cytoplasmic segment spans residues 723 to 770 (LKKKQYTSIHHGVVEVDAAVTPEERHLSKMQQNGYENPTYKFFEQMQN). The Basolateral sorting signal motif lies at 724-734 (KKKQYTSIHHG). Threonine 729 carries the post-translational modification Phosphothreonine. Phosphoserine; by APP-kinase I is present on serine 730. The interval 732–751 (HHGVVEVDAAVTPEERHLSK) is interaction with G(o)-alpha. A Phosphothreonine; by CDK5 and MAPK10 modification is found at threonine 743. The interval 756–770 (GYENPTYKFFEQMQN) is required for the interaction with KIF5B and for anterograde transport in axons. Phosphotyrosine; by ABL1 is present on tyrosine 757. A YENPXY motif; contains endocytosis signal motif is present at residues 757-762 (YENPTY). Lysine 763 is covalently cross-linked (Glycyl lysine isopeptide (Lys-Gly) (interchain with G-Cter in ubiquitin)).

This sequence belongs to the APP family. As to quaternary structure, binds, via its C-terminus, to the PID domain of several cytoplasmic proteins, including APBB family members, the APBA family, MAPK8IP1, SHC1 and NUMB and DAB1. Binding to DAB1 inhibits its serine phosphorylation. Interacts (via NPXY motif) with DAB2 (via PID domain); the interaction is impaired by tyrosine phosphorylation of the NPXY motif. Also interacts with GPCR-like protein BPP, APPBP1, IB1, KNS2 (via its TPR domains), APPBP2 (via BaSS) and DDB1. In vitro, it binds MAPT via the MT-binding domains. Associates with microtubules in the presence of ATP and in a kinesin-dependent manner. Interacts, through a C-terminal domain, with GNAO1. Amyloid-beta protein 42 binds CHRNA7 in hippocampal neurons. Amyloid-beta associates with HADH2. Interacts with CPEB1, ANKS1B and AGER. Interacts with ITM2B. Interacts with ITM2C. Interacts with IDE. Can form homodimers; dimerization is enhanced in the presence of Cu(2+) ions. Can form homodimers; this is promoted by heparin binding. Amyloid-beta protein 40 interacts with S100A9. CTF-alpha product of APP interacts with GSAP. Isoform APP695 interacts with SORL1 (via N-terminal ectodomain); this interaction retains APP in the trans-Golgi network and reduces processing into soluble APP-alpha and amyloid-beta peptides. Isoform APP770 interacts with SORL1. The C99 fragment also interacts with SORL1. Interacts with PLD3. Interacts with VDAC1. Interacts with NSG1; could regulate APP processing. Amyloid-beta protein 42 interacts with FPR2. Interacts (via transmembrane region) with PSEN1; the interaction is direct. Interacts with LRRK2. Interacts (via cytoplasmic domain) with KIF5B. Interacts (via C-terminus) with APBB2/FE65L1 (via C-terminus). Interacts (via intracellular domain) with APBB3. Post-translationally, proteolytically processed under normal cellular conditions. Cleavage either by alpha-secretase, beta-secretase or theta-secretase leads to generation and extracellular release of soluble APP peptides, S-APP-alpha and S-APP-beta, and the retention of corresponding membrane-anchored C-terminal fragments, C80, C83 and C99. Subsequent processing of C80 and C83 by gamma-secretase yields P3 peptides. This is the major secretory pathway and is non-amyloidogenic. Alternatively, presenilin/nicastrin-mediated gamma-secretase processing of C99 releases the amyloid-beta proteins, amyloid-beta protein 40 and amyloid-beta protein 42, major components of amyloid plaques, and the cytotoxic C-terminal fragments, gamma-CTF(50), gamma-CTF(57) and gamma-CTF(59). PSEN1 cleavage is more efficient with C83 than with C99 as substrate (in vitro). Amyloid-beta protein 40 and Amyloid-beta protein 42 are cleaved by ACE. Many other minor amyloid-beta peptides, amyloid-beta 1-X peptides, are found in cerebral spinal fluid (CSF) including the amyloid-beta X-15 peptides, produced from the cleavage by alpha-secretase. In terms of processing, proteolytically cleaved by caspases during neuronal apoptosis. Cleavage at Asp-739 by either CASP6, CASP8 or CASP9 results in the production of the neurotoxic C31 peptide and the increased production of amyloid-beta peptides. N- and O-glycosylated. Post-translationally, phosphorylation in the C-terminal on tyrosine, threonine and serine residues is neuron-specific. Phosphorylation can affect APP processing, neuronal differentiation and interaction with other proteins. Phosphorylated on Thr-743 in neuronal cells by Cdc5 kinase and Mapk10, in dividing cells by Cdc2 kinase in a cell-cycle dependent manner with maximal levels at the G2/M phase and, in vitro, by GSK-3-beta. The Thr-743 phosphorylated form causes a conformational change which reduces binding of Fe65 family members. In dopaminergic (DA) neurons, phosphorylation on Thr-743 by LRKK2 promotes the production and the nuclear translocation of the APP intracellular domain (AICD) which induces DA neuron apoptosis. Phosphorylation on Tyr-757 is required for SHC binding. Phosphorylated in the extracellular domain by casein kinases on both soluble and membrane-bound APP. This phosphorylation is inhibited by heparin. In terms of processing, N- and O-glycosylated. O-linkage of chondroitin sulfate to the L-APP isoforms produces the APP proteoglycan core proteins, the appicans. Extracellular binding and reduction of copper, results in a corresponding oxidation of Cys-144 and Cys-158, and the formation of a disulfide bond. Post-translationally, trophic-factor deprivation triggers the cleavage of surface APP by beta-secretase to release sAPP-beta which is further cleaved to release an N-terminal fragment of APP (N-APP). In terms of processing, amyloid-beta peptides are degraded by IDE. Sulfated on tyrosine residues. As to expression, isoform APP695 is the major isoform found in brain. The longer isoforms containing the BPTI domain are predominantly expressed in peripheral organs such as muscle and liver.

The protein localises to the cell membrane. It is found in the membrane. It localises to the perikaryon. Its subcellular location is the cell projection. The protein resides in the growth cone. The protein localises to the clathrin-coated pit. It is found in the early endosome. It localises to the cytoplasmic vesicle. Its subcellular location is the endoplasmic reticulum. The protein resides in the golgi apparatus. The protein localises to the secreted. It is found in the cell surface. It localises to the nucleus. Its subcellular location is the cytoplasm. Functions as a cell surface receptor and performs physiological functions on the surface of neurons relevant to neurite growth, neuronal adhesion and axonogenesis. Interaction between APP molecules on neighboring cells promotes synaptogenesis. Involved in cell mobility and transcription regulation through protein-protein interactions. Can promote transcription activation through binding to APBB1-KAT5 and inhibit Notch signaling through interaction with Numb. Couples to apoptosis-inducing pathways such as those mediated by G(o) and JIP. Inhibits G(o)-alpha ATPase activity. Acts as a kinesin I membrane receptor, mediating the axonal transport of beta-secretase and presenilin 1. By acting as a kinesin I membrane receptor, plays a role in axonal anterograde transport of cargo towards synapses in axons. May be involved in copper homeostasis/oxidative stress through copper ion reduction. In vitro, copper-metallated APP induces neuronal death directly or is potentiated through Cu(2+)-mediated low-density lipoprotein oxidation. Can regulate neurite outgrowth through binding to components of the extracellular matrix such as heparin and collagen I and IV. Induces a AGER-dependent pathway that involves activation of p38 MAPK, resulting in internalization of amyloid-beta peptide and mitochondrial dysfunction in cultured cortical neurons. Provides Cu(2+) ions for GPC1 which are required for release of nitric oxide (NO) and subsequent degradation of the heparan sulfate chains on GPC1. Functionally, amyloid-beta peptides are lipophilic metal chelators with metal-reducing activity. Binds transient metals such as copper, zinc and iron. Amyloid-beta peptides bind to lipoproteins and apolipoproteins E and J in the CSF and to HDL particles in plasma, inhibiting metal-catalyzed oxidation of lipoproteins. Also bind GPC1 in lipid rafts. Its function is as follows. Appicans elicit adhesion of neural cells to the extracellular matrix and may regulate neurite outgrowth in the brain. In terms of biological role, the gamma-CTF peptides as well as the caspase-cleaved peptides, including C31, are potent enhancers of neuronal apoptosis. This Cavia porcellus (Guinea pig) protein is Amyloid-beta precursor protein.